The chain runs to 123 residues: Small ribosomal subunit protein uS12 (123 aa).

Position 89 is a 3-methylthioaspartic acid (aspartate 89).

Belongs to the universal ribosomal protein uS12 family. Part of the 30S ribosomal subunit. Contacts proteins S8 and S17. May interact with IF1 in the 30S initiation complex.

Functionally, with S4 and S5 plays an important role in translational accuracy. Interacts with and stabilizes bases of the 16S rRNA that are involved in tRNA selection in the A site and with the mRNA backbone. Located at the interface of the 30S and 50S subunits, it traverses the body of the 30S subunit contacting proteins on the other side and probably holding the rRNA structure together. The combined cluster of proteins S8, S12 and S17 appears to hold together the shoulder and platform of the 30S subunit. The protein is Small ribosomal subunit protein uS12 of Phenylobacterium zucineum (strain HLK1).